The sequence spans 255 residues: Probable transcriptional regulatory protein PCC7424_2775 (255 aa).

The protein belongs to the TACO1 family.

The protein resides in the cytoplasm. This chain is Probable transcriptional regulatory protein PCC7424_2775, found in Gloeothece citriformis (strain PCC 7424) (Cyanothece sp. (strain PCC 7424)).